The following is a 451-amino-acid chain: MVVVAILAAGRGTRMKSDLPKVLHSLGGRSLVERVIDSVEPLSPSRRLVIVGYQAEQVKTGLQSPNLEFVEQTVQLGTGHAIQQLLPHLEGYRGDLLVLNGDVPLLRTQTLEQLLQTHQTNQNAATILTSHLPNPKGYGRVFCNGNNIVQQIVEDKDCSPAQRQNHRINAGIYCFRWENLAQVLPHLEANNAQKEYYLTDAVTQVGQVMAVDVEDYQEILGINDRLQLATAYEILQRRVKEQWMMAGVTLIDPNSITIDDTVELQPDVIIEPQTHLRGSTVIQSGSRIGPGSLIENSQLGANVTVHYSVVTDSTIQDGTKIGPYAHLRGHAQVGANCRIGNFVELKNTELGDRTNVAHLSYLGDATAGTQVNIGAGTITANYDGVKKHRTKIGDRTKTGSNSVLVAPVTLGDDVYVAAGSTVTEDVPNDSLVIARTRQVIKLGWRRKSGES.

A pyrophosphorylase region spans residues 1-225 (MVVVAILAAG…YQEILGINDR (225 aa)). UDP-N-acetyl-alpha-D-glucosamine-binding positions include 7–10 (LAAG), Lys-21, Gln-72, and 77–78 (GT). Asp-102 contributes to the Mg(2+) binding site. Residues Gly-139, Glu-154, Asn-169, and Asn-223 each contribute to the UDP-N-acetyl-alpha-D-glucosamine site. Asn-223 provides a ligand contact to Mg(2+). Residues 226-246 (LQLATAYEILQRRVKEQWMMA) are linker. Residues 247 to 451 (GVTLIDPNSI…LGWRRKSGES (205 aa)) form an N-acetyltransferase region. Arg-328 and Lys-346 together coordinate UDP-N-acetyl-alpha-D-glucosamine. His-358 functions as the Proton acceptor in the catalytic mechanism. Positions 361 and 372 each coordinate UDP-N-acetyl-alpha-D-glucosamine. Acetyl-CoA contacts are provided by residues Ala-375, 381-382 (NY), Ser-400, Ala-418, and Arg-435.

It in the N-terminal section; belongs to the N-acetylglucosamine-1-phosphate uridyltransferase family. The protein in the C-terminal section; belongs to the transferase hexapeptide repeat family. In terms of assembly, homotrimer. The cofactor is Mg(2+).

Its subcellular location is the cytoplasm. The enzyme catalyses alpha-D-glucosamine 1-phosphate + acetyl-CoA = N-acetyl-alpha-D-glucosamine 1-phosphate + CoA + H(+). The catalysed reaction is N-acetyl-alpha-D-glucosamine 1-phosphate + UTP + H(+) = UDP-N-acetyl-alpha-D-glucosamine + diphosphate. It functions in the pathway nucleotide-sugar biosynthesis; UDP-N-acetyl-alpha-D-glucosamine biosynthesis; N-acetyl-alpha-D-glucosamine 1-phosphate from alpha-D-glucosamine 6-phosphate (route II): step 2/2. The protein operates within nucleotide-sugar biosynthesis; UDP-N-acetyl-alpha-D-glucosamine biosynthesis; UDP-N-acetyl-alpha-D-glucosamine from N-acetyl-alpha-D-glucosamine 1-phosphate: step 1/1. It participates in bacterial outer membrane biogenesis; LPS lipid A biosynthesis. Its function is as follows. Catalyzes the last two sequential reactions in the de novo biosynthetic pathway for UDP-N-acetylglucosamine (UDP-GlcNAc). The C-terminal domain catalyzes the transfer of acetyl group from acetyl coenzyme A to glucosamine-1-phosphate (GlcN-1-P) to produce N-acetylglucosamine-1-phosphate (GlcNAc-1-P), which is converted into UDP-GlcNAc by the transfer of uridine 5-monophosphate (from uridine 5-triphosphate), a reaction catalyzed by the N-terminal domain. This is Bifunctional protein GlmU from Nostoc sp. (strain PCC 7120 / SAG 25.82 / UTEX 2576).